The sequence spans 276 residues: Undecaprenyl-diphosphatase (276 aa).

5 consecutive transmembrane segments (helical) span residues 85–105 (MNVV…EKTI), 108–128 (VLFA…AILW), 187–207 (VATE…TLYE), 217–237 (VDSV…AFAC), and 253–273 (FAWY…SGWI).

The protein belongs to the UppP family.

The protein localises to the cell inner membrane. The catalysed reaction is di-trans,octa-cis-undecaprenyl diphosphate + H2O = di-trans,octa-cis-undecaprenyl phosphate + phosphate + H(+). Functionally, catalyzes the dephosphorylation of undecaprenyl diphosphate (UPP). Confers resistance to bacitracin. The sequence is that of Undecaprenyl-diphosphatase from Burkholderia mallei (strain NCTC 10247).